The primary structure comprises 369 residues: Deoxyhypusine synthase (369 aa).

Residues 105 to 109, 131 to 133, Glu137, and Asp238 each bind NAD(+); these read SNLIS and TAG. 136–137 contributes to the spermidine binding site; the sequence is EE. Position 243 (Asp243) interacts with spermidine. Gly283 provides a ligand contact to NAD(+). His288 contacts spermidine. 308-309 is an NAD(+) binding site; that stretch reads TA. Spermidine-binding positions include 314–316 and 323–329; these read GSD and EAVSWGK. Lys329 serves as the catalytic Nucleophile. 342–343 lines the NAD(+) pocket; it reads DA.

This sequence belongs to the deoxyhypusine synthase family. Requires NAD(+) as cofactor.

It carries out the reaction [eIF5A protein]-L-lysine + spermidine = [eIF5A protein]-deoxyhypusine + propane-1,3-diamine. The protein operates within protein modification; eIF5A hypusination. In terms of biological role, catalyzes the NAD-dependent oxidative cleavage of spermidine and the subsequent transfer of the butylamine moiety of spermidine to the epsilon-amino group of a critical lysine residue of the eIF-5A precursor protein to form the intermediate deoxyhypusine residue. This is the first step of the post-translational modification of that lysine into an unusual amino acid residue named hypusine. Hypusination is unique to mature eIF-5A factor and is essential for its function. This is Deoxyhypusine synthase (Dhps) from Mus musculus (Mouse).